We begin with the raw amino-acid sequence, 160 residues long: Eukaryotic translation initiation factor 5A-2 (160 aa).

Basic and acidic residues predominate over residues 1–12 (MSDEEHHFESKA). The segment at 1–21 (MSDEEHHFESKADAGASKTFP) is disordered. Lys-52 carries the post-translational modification Hypusine.

It belongs to the eIF-5A family. Lys-52 undergoes hypusination, a unique post-translational modification that consists in the addition of a butylamino group from spermidine to lysine side chain, leading to the formation of the unusual amino acid hypusine. eIF-5As are the only known proteins to undergo this modification, which is essential for their function.

Its function is as follows. Translation factor that promotes translation elongation and termination, particularly upon ribosome stalling at specific amino acid sequence contexts. Binds between the exit (E) and peptidyl (P) site of the ribosome and promotes rescue of stalled ribosome: specifically required for efficient translation of polyproline-containing peptides as well as other motifs that stall the ribosome. Acts as a ribosome quality control (RQC) cofactor by joining the RQC complex to facilitate peptidyl transfer during CAT tailing step. The polypeptide is Eukaryotic translation initiation factor 5A-2 (Solanum lycopersicum (Tomato)).